The primary structure comprises 452 residues: tRNA modification GTPase MnmE (452 aa).

Residues Arg22, Glu80, and Lys119 each contribute to the (6S)-5-formyl-5,6,7,8-tetrahydrofolate site. Residues 213–375 enclose the TrmE-type G domain; that stretch reads GVRTVIVGKP…LENKIYEKFF (163 aa). Asn223 lines the K(+) pocket. Residues 223–228, 242–248, and 267–270 each bind GTP; these read NSGKST, TDIPGTT, and DTAG. Ser227 is a binding site for Mg(2+). Thr242, Ile244, and Thr247 together coordinate K(+). Thr248 contributes to the Mg(2+) binding site. Lys452 is a binding site for (6S)-5-formyl-5,6,7,8-tetrahydrofolate.

This sequence belongs to the TRAFAC class TrmE-Era-EngA-EngB-Septin-like GTPase superfamily. TrmE GTPase family. Homodimer. Heterotetramer of two MnmE and two MnmG subunits. K(+) is required as a cofactor.

Its subcellular location is the cytoplasm. In terms of biological role, exhibits a very high intrinsic GTPase hydrolysis rate. Involved in the addition of a carboxymethylaminomethyl (cmnm) group at the wobble position (U34) of certain tRNAs, forming tRNA-cmnm(5)s(2)U34. This is tRNA modification GTPase MnmE from Petrotoga mobilis (strain DSM 10674 / SJ95).